We begin with the raw amino-acid sequence, 51 residues long: Large ribosomal subunit protein eL40 (51 aa).

Zn(2+) contacts are provided by cysteine 17, cysteine 20, cysteine 31, and cysteine 34.

It belongs to the eukaryotic ribosomal protein eL40 family. Part of the 50S ribosomal subunit. Requires Zn(2+) as cofactor.

The chain is Large ribosomal subunit protein eL40 from Thermococcus kodakarensis (strain ATCC BAA-918 / JCM 12380 / KOD1) (Pyrococcus kodakaraensis (strain KOD1)).